The primary structure comprises 505 residues: Ribose import ATP-binding protein RbsA (505 aa).

2 ABC transporter domains span residues 12 to 249 (LQMK…VGRK) and 259 to 504 (VKKG…VAFS). Position 44–51 (44–51 (GENGAGKS)) interacts with ATP.

The protein belongs to the ABC transporter superfamily. Ribose importer (TC 3.A.1.2.1) family. The complex is composed of an ATP-binding protein (RbsA), two transmembrane proteins (RbsC) and a solute-binding protein (RbsB).

The protein localises to the cell membrane. It catalyses the reaction D-ribose(out) + ATP + H2O = D-ribose(in) + ADP + phosphate + H(+). In terms of biological role, part of the ABC transporter complex RbsABC involved in ribose import. Responsible for energy coupling to the transport system. The sequence is that of Ribose import ATP-binding protein RbsA from Clostridium tetani (strain Massachusetts / E88).